Reading from the N-terminus, the 159-residue chain is Keratin-associated protein 11-1 (159 aa).

4 repeat units span residues 107-116 (CQPLSGVSTV), 117-126 (CKPVRSISTV), 127-136 (CQPVGGVSTI), and 137-146 (CQPTCGVSRT). The interval 107-146 (CQPLSGVSTVCKPVRSISTVCQPVGGVSTICQPTCGVSRT) is 4 X 10 AA approximate repeats.

The protein belongs to the PMG family. In terms of tissue distribution, wool.

In terms of biological role, in the wool cortex, wool keratin intermediate filaments are embedded in an interfilamentous matrix, consisting of wool keratin-associated proteins (KRTAP), which are essential for the formation of a rigid and resistant wool shaft through their extensive disulfide bond cross-linking with abundant cysteine residues of wool keratins. The matrix proteins include the high-sulfur and high-glycine-tyrosine keratins. This is Keratin-associated protein 11-1 (KRTAP11-1) from Capra hircus (Goat).